Reading from the N-terminus, the 108-residue chain is Vacuolar ATPase assembly integral membrane protein VMA21 (108 aa).

Residues 1–34 (MASRRSAAAKKEDFSFEAAATQSAHEAQEGFPSS) are Cytoplasmic-facing. Residues 35-55 (VIIKLVLVTVAMICAPLGTYF) form a helical membrane-spanning segment. At 56-68 (GTLNTICGGDSSY) the chain is on the lumenal side. Residues 69–89 (AGALAAISVNVVLIIYLIIAA) traverse the membrane as a helical segment. Over 90-108 (REDTGESEEERKGKEGKEE) the chain is Cytoplasmic.

Belongs to the VMA21 family.

The protein resides in the endoplasmic reticulum membrane. It is found in the endoplasmic reticulum-Golgi intermediate compartment membrane. Its subcellular location is the cytoplasmic vesicle. The protein localises to the COPII-coated vesicle membrane. Its function is as follows. Required for the assembly of the V0 complex of the vacuolar ATPase (V-ATPase) in the endoplasmic reticulum. This Ajellomyces capsulatus (strain NAm1 / WU24) (Darling's disease fungus) protein is Vacuolar ATPase assembly integral membrane protein VMA21.